A 143-amino-acid polypeptide reads, in one-letter code: Nucleoside diphosphate kinase (143 aa).

ATP-binding residues include Lys11, Phe59, Arg87, Thr93, Arg104, and Asn114. His117 functions as the Pros-phosphohistidine intermediate in the catalytic mechanism.

Belongs to the NDK family. As to quaternary structure, homotetramer. Requires Mg(2+) as cofactor.

It localises to the cytoplasm. The enzyme catalyses a 2'-deoxyribonucleoside 5'-diphosphate + ATP = a 2'-deoxyribonucleoside 5'-triphosphate + ADP. The catalysed reaction is a ribonucleoside 5'-diphosphate + ATP = a ribonucleoside 5'-triphosphate + ADP. Functionally, major role in the synthesis of nucleoside triphosphates other than ATP. The ATP gamma phosphate is transferred to the NDP beta phosphate via a ping-pong mechanism, using a phosphorylated active-site intermediate. This chain is Nucleoside diphosphate kinase, found in Pseudoalteromonas atlantica (strain T6c / ATCC BAA-1087).